The primary structure comprises 328 residues: Malate dehydrogenase (328 aa).

Position 11-17 (11-17) interacts with NAD(+); that stretch reads GAAGQIG. Residues R94 and R100 each contribute to the substrate site. Residues N107, Q114, and 131-133 contribute to the NAD(+) site; that span reads VGN. Substrate-binding residues include N133 and R164. H189 acts as the Proton acceptor in catalysis.

This sequence belongs to the LDH/MDH superfamily. MDH type 2 family.

The catalysed reaction is (S)-malate + NAD(+) = oxaloacetate + NADH + H(+). Functionally, catalyzes the reversible oxidation of malate to oxaloacetate. The protein is Malate dehydrogenase of Xanthomonas oryzae pv. oryzae (strain PXO99A).